Consider the following 247-residue polypeptide: Transcription factor bHLH92 (247 aa).

The 50-residue stretch at 85–134 (ERSRRHMLKERTRREKQKQSYLALHSLLPFATKNDKNSIVEKAVDEIAKL) folds into the bHLH domain.

In terms of assembly, homodimer.

It localises to the nucleus. The polypeptide is Transcription factor bHLH92 (BHLH92) (Arabidopsis thaliana (Mouse-ear cress)).